The primary structure comprises 600 residues: Dihydroxy-acid dehydratase (600 aa).

Asp-82 is a Mg(2+) binding site. Cys-123 is a [2Fe-2S] cluster binding site. Mg(2+) contacts are provided by Asp-124 and Lys-125. An N6-carboxylysine modification is found at Lys-125. Position 192 (Cys-192) interacts with [2Fe-2S] cluster. A Mg(2+)-binding site is contributed by Glu-489. Catalysis depends on Ser-515, which acts as the Proton acceptor.

It belongs to the IlvD/Edd family. Homodimer. [2Fe-2S] cluster serves as cofactor. The cofactor is Mg(2+).

It catalyses the reaction (2R)-2,3-dihydroxy-3-methylbutanoate = 3-methyl-2-oxobutanoate + H2O. The catalysed reaction is (2R,3R)-2,3-dihydroxy-3-methylpentanoate = (S)-3-methyl-2-oxopentanoate + H2O. It participates in amino-acid biosynthesis; L-isoleucine biosynthesis; L-isoleucine from 2-oxobutanoate: step 3/4. It functions in the pathway amino-acid biosynthesis; L-valine biosynthesis; L-valine from pyruvate: step 3/4. Its function is as follows. Functions in the biosynthesis of branched-chain amino acids. Catalyzes the dehydration of (2R,3R)-2,3-dihydroxy-3-methylpentanoate (2,3-dihydroxy-3-methylvalerate) into 2-oxo-3-methylpentanoate (2-oxo-3-methylvalerate) and of (2R)-2,3-dihydroxy-3-methylbutanoate (2,3-dihydroxyisovalerate) into 2-oxo-3-methylbutanoate (2-oxoisovalerate), the penultimate precursor to L-isoleucine and L-valine, respectively. This is Dihydroxy-acid dehydratase from Phocaeicola vulgatus (strain ATCC 8482 / DSM 1447 / JCM 5826 / CCUG 4940 / NBRC 14291 / NCTC 11154) (Bacteroides vulgatus).